Here is a 466-residue protein sequence, read N- to C-terminus: SVGFKAGVKDYKLTYYTPEYETKDTDILAAFRVTPQPGVPPEEAGAAVAAESSTGTWTTVWTDGLTSLDRYKGRCYNIEPVAGEENQYIAYVAYPLDLFEEGSVTNMFTSIVGNVFGFKALRALRLEDLRIPKSYIKTFEGPPHGIQVERDKLNKYGRPLLGCTIKPKLGLSAKNYGRAVYECLRGGLDFTKDDENVNSQPFMRWRDRFLFCAEALFKAQAETGEIKGHYLNATAGTCEEMIKRAVCARELGAPIVMHDYLTGGFTANTSLAHYCRDNGLLLHIHRAMHAVIDRQKNHGMHFRVLAKALRLSGGDHIHAGTVVGKLEGEREITLGFVDLLRDDFVEKDRSRGIYFTQDWVSLPGVIPVASGGIHVWHMPALTEIFGDDSVLQFGGGTLGHPWGNAPGAVANRVALEACVQARNEGRDLAREGNTIIREASKWSPELAAACEVWKEIKFEFPAMDTL.

Lys5 bears the N6,N6,N6-trimethyllysine mark. Residues Asn114 and Thr164 each contribute to the substrate site. Catalysis depends on Lys166, which acts as the Proton acceptor. Lys168 contributes to the substrate binding site. Residues Lys192, Asp194, and Glu195 each coordinate Mg(2+). Lys192 is subject to N6-carboxylysine. His285 serves as the catalytic Proton acceptor. Substrate-binding residues include Arg286, His318, and Ser370.

The protein belongs to the RuBisCO large chain family. Type I subfamily. As to quaternary structure, heterohexadecamer of 8 large chains and 8 small chains; disulfide-linked. The disulfide link is formed within the large subunit homodimers. It depends on Mg(2+) as a cofactor. Post-translationally, the disulfide bond which can form in the large chain dimeric partners within the hexadecamer appears to be associated with oxidative stress and protein turnover.

The protein localises to the plastid. It is found in the chloroplast. The catalysed reaction is 2 (2R)-3-phosphoglycerate + 2 H(+) = D-ribulose 1,5-bisphosphate + CO2 + H2O. It catalyses the reaction D-ribulose 1,5-bisphosphate + O2 = 2-phosphoglycolate + (2R)-3-phosphoglycerate + 2 H(+). RuBisCO catalyzes two reactions: the carboxylation of D-ribulose 1,5-bisphosphate, the primary event in carbon dioxide fixation, as well as the oxidative fragmentation of the pentose substrate in the photorespiration process. Both reactions occur simultaneously and in competition at the same active site. The polypeptide is Ribulose bisphosphate carboxylase large chain (Gonopterodendron arboreum (Maracaibo lignum-vitae)).